Here is a 214-residue protein sequence, read N- to C-terminus: Probable transaldolase (214 aa).

Catalysis depends on K83, which acts as the Schiff-base intermediate with substrate.

This sequence belongs to the transaldolase family. Type 3B subfamily.

The protein localises to the cytoplasm. It catalyses the reaction D-sedoheptulose 7-phosphate + D-glyceraldehyde 3-phosphate = D-erythrose 4-phosphate + beta-D-fructose 6-phosphate. Its pathway is carbohydrate degradation; pentose phosphate pathway; D-glyceraldehyde 3-phosphate and beta-D-fructose 6-phosphate from D-ribose 5-phosphate and D-xylulose 5-phosphate (non-oxidative stage): step 2/3. Functionally, transaldolase is important for the balance of metabolites in the pentose-phosphate pathway. This is Probable transaldolase from Geobacter sp. (strain M21).